Here is a 70-residue protein sequence, read N- to C-terminus: uncharacterized protein (70 aa).

Belongs to the opacity porin family.

This is an uncharacterized protein from Haemophilus influenzae (strain ATCC 51907 / DSM 11121 / KW20 / Rd).